A 476-amino-acid polypeptide reads, in one-letter code: Aspartyl/glutamyl-tRNA(Asn/Gln) amidotransferase subunit B (476 aa).

Belongs to the GatB/GatE family. GatB subfamily. In terms of assembly, heterotrimer of A, B and C subunits.

The enzyme catalyses L-glutamyl-tRNA(Gln) + L-glutamine + ATP + H2O = L-glutaminyl-tRNA(Gln) + L-glutamate + ADP + phosphate + H(+). It carries out the reaction L-aspartyl-tRNA(Asn) + L-glutamine + ATP + H2O = L-asparaginyl-tRNA(Asn) + L-glutamate + ADP + phosphate + 2 H(+). Functionally, allows the formation of correctly charged Asn-tRNA(Asn) or Gln-tRNA(Gln) through the transamidation of misacylated Asp-tRNA(Asn) or Glu-tRNA(Gln) in organisms which lack either or both of asparaginyl-tRNA or glutaminyl-tRNA synthetases. The reaction takes place in the presence of glutamine and ATP through an activated phospho-Asp-tRNA(Asn) or phospho-Glu-tRNA(Gln). In Lactobacillus acidophilus (strain ATCC 700396 / NCK56 / N2 / NCFM), this protein is Aspartyl/glutamyl-tRNA(Asn/Gln) amidotransferase subunit B.